The sequence spans 162 residues: Protein A49 (162 aa).

This sequence belongs to the poxviridae A49 protein family.

The chain is Protein A49 from Variola virus (isolate Human/India/Ind3/1967) (VARV).